The following is a 155-amino-acid chain: MSAVLDTPVAVRRTAMDLLARREHGRVELTRKLRQRGAPDELIEPALDRLAEEGLLSEARYLESFIRYRSNAGYGPARIREELGQRGLDRGDIDQSLRESEVDWAARLEEVWQRKFAGQRPQDPRSRAQQTRFLAYRGFSMEMIGRLLSGRDLYD.

Belongs to the RecX family.

Its subcellular location is the cytoplasm. Its function is as follows. Modulates RecA activity. This is Regulatory protein RecX from Pseudomonas entomophila (strain L48).